Here is a 180-residue protein sequence, read N- to C-terminus: Adenine phosphoribosyltransferase (180 aa).

An N-acetylserine modification is found at S2. Phosphoserine is present on residues S4, S15, and S30. Y60 is modified (phosphotyrosine). A Phosphoserine modification is found at S66. K114 is subject to N6-acetyllysine. Residue T135 is modified to Phosphothreonine.

This sequence belongs to the purine/pyrimidine phosphoribosyltransferase family. In terms of assembly, homodimer.

The protein localises to the cytoplasm. The enzyme catalyses AMP + diphosphate = 5-phospho-alpha-D-ribose 1-diphosphate + adenine. Its pathway is purine metabolism; AMP biosynthesis via salvage pathway; AMP from adenine: step 1/1. Its function is as follows. Catalyzes a salvage reaction resulting in the formation of AMP, that is energically less costly than de novo synthesis. This Mus pahari (Gairdner's shrew-mouse) protein is Adenine phosphoribosyltransferase.